Consider the following 219-residue polypeptide: Probable cutinase 4 (219 aa).

Positions 1–17 are cleaved as a signal peptide; the sequence is MILPSLLVASLSALAAA. 2 cysteine pairs are disulfide-bonded: Cys41-Cys120 and Cys67-Cys81. Asn99 is a glycosylation site (N-linked (GlcNAc...) asparagine). Ser131 (nucleophile) is an active-site residue. Cys182 and Cys189 are oxidised to a cystine. Asp186 is an active-site residue. His199 (proton donor/acceptor) is an active-site residue.

Belongs to the cutinase family.

It localises to the secreted. It catalyses the reaction cutin + H2O = cutin monomers.. Catalyzes the hydrolysis of complex carboxylic polyesters found in the cell wall of plants. Degrades cutin, a macromolecule that forms the structure of the plant cuticle. This chain is Probable cutinase 4, found in Aspergillus terreus (strain NIH 2624 / FGSC A1156).